The chain runs to 498 residues: Protein nucleotidyltransferase YdiU (498 aa).

ATP-binding residues include Gly88, Gly90, Arg91, Lys111, Asp123, Gly124, Arg174, and Arg181. The active-site Proton acceptor is the Asp250. Residues Asn251 and Asp260 each coordinate Mg(2+). Residue Asp260 coordinates ATP.

The protein belongs to the SELO family. Mg(2+) serves as cofactor. The cofactor is Mn(2+).

The enzyme catalyses L-seryl-[protein] + ATP = 3-O-(5'-adenylyl)-L-seryl-[protein] + diphosphate. It carries out the reaction L-threonyl-[protein] + ATP = 3-O-(5'-adenylyl)-L-threonyl-[protein] + diphosphate. The catalysed reaction is L-tyrosyl-[protein] + ATP = O-(5'-adenylyl)-L-tyrosyl-[protein] + diphosphate. It catalyses the reaction L-histidyl-[protein] + UTP = N(tele)-(5'-uridylyl)-L-histidyl-[protein] + diphosphate. The enzyme catalyses L-seryl-[protein] + UTP = O-(5'-uridylyl)-L-seryl-[protein] + diphosphate. It carries out the reaction L-tyrosyl-[protein] + UTP = O-(5'-uridylyl)-L-tyrosyl-[protein] + diphosphate. Nucleotidyltransferase involved in the post-translational modification of proteins. It can catalyze the addition of adenosine monophosphate (AMP) or uridine monophosphate (UMP) to a protein, resulting in modifications known as AMPylation and UMPylation. The sequence is that of Protein nucleotidyltransferase YdiU from Methylorubrum populi (strain ATCC BAA-705 / NCIMB 13946 / BJ001) (Methylobacterium populi).